A 427-amino-acid polypeptide reads, in one-letter code: Mannosylglucosylglycerate synthase (427 aa).

The protein belongs to the glycosyltransferase group 1 family. Co(2+) is required as a cofactor. Requires Mg(2+) as cofactor. Mn(2+) serves as cofactor. The cofactor is Ni(2+).

It catalyses the reaction (2R)-2-O-(alpha-D-glucopyranosyl)-glycerate + GDP-alpha-D-mannose = (2R)-2-O-[alpha-D-mannopyranosyl-(1-&gt;2)-alpha-D-glucopyranosyl]-glycerate + GDP + H(+). In terms of biological role, catalyzes the synthesis of mannosylglucosylglycerate (MGG) from glucosylglycerate (GG) and GDP-mannose. The polypeptide is Mannosylglucosylglycerate synthase (Thermotoga maritima (strain ATCC 43589 / DSM 3109 / JCM 10099 / NBRC 100826 / MSB8)).